The chain runs to 610 residues: MCGIVGAVAQRDVAEILVEGLRRLEYRGYDSAGVAVVDSQSNLTRIRRLGKVQELADAVDQAEVVGGTGIAHTRWATHGEPSEINAHPHQSGDISVVHNGIIENHETLRELLQSRGYVFESQTDTEVIAHLVEWELRTAASLLEAVQKTVKQLEGAYGTVVLDRNDPSRIVVARSGSPIVIGFGVGENFLASDQLALLNVTRRFMYLEEGDVAEITRREVAVYDALGERVEREIAESNAEHDAGDKGQYRHFMQKEIYEQPTALINTMEGRITADSVVTEAIGVNAAEILSKVEHVQIVACGTSYNAGMTARYWFEDIAGVSCDVEIASEFRYRKFVTRPNSLLITLSQSGETADTLAALRLAKEKGYMAAMTICNVAGSSLVRESDFAFMTRAGVEIGVASTKAFTTQLAALLMLVTALGKQQGRISKEKEKEIVEALHALPKQINAALSFEKDIEALATDFADKHHTLFLGRGEFYPIAMEASLKLKEISYIHAEAYAAGELKHGPLALIDADMPVVVVAPSNDLLEKLKSNVEEVRARGGLLYVFADADAGFEGDETMKIITMPHVSEITAAIYYTIPMQLLSYYVALIKGTDVDQPRNLAKAVTVE.

Cys-2 acts as the Nucleophile; for GATase activity in catalysis. Residues 2 to 218 (CGIVGAVAQR…EGDVAEITRR (217 aa)) enclose the Glutamine amidotransferase type-2 domain. SIS domains are found at residues 286–426 (AAEI…QQGR) and 459–600 (LATD…VDQP). Lys-605 acts as the For Fru-6P isomerization activity in catalysis.

Homodimer.

Its subcellular location is the cytoplasm. The enzyme catalyses D-fructose 6-phosphate + L-glutamine = D-glucosamine 6-phosphate + L-glutamate. Functionally, catalyzes the first step in hexosamine metabolism, converting fructose-6P into glucosamine-6P using glutamine as a nitrogen source. The polypeptide is Glutamine--fructose-6-phosphate aminotransferase [isomerizing] (Vibrio vulnificus (strain YJ016)).